The chain runs to 443 residues: Structure-specific endonuclease subunit SLX1 (443 aa).

The GIY-YIG domain occupies 13-93; that stretch reads RVYVCYCLRS…QKPHASRHLR (81 aa). A disordered region spans residues 121-140; that stretch reads FPATRSSAPSSAASHDSGLN. The SLX1-type zinc finger occupies 361–419; that stretch reads CGLCGGHINRHVPLSYTHCPHACDAVFHLTCLARYSLEQETRAHARTFCLPTSAWCPMC.

Belongs to the SLX1 family. As to quaternary structure, forms a heterodimer with SLX4. Requires a divalent metal cation as cofactor.

It localises to the nucleus. Catalytic subunit of the SLX1-SLX4 structure-specific endonuclease that resolves DNA secondary structures generated during DNA repair and recombination. Has endonuclease activity towards branched DNA substrates, introducing single-strand cuts in duplex DNA close to junctions with ss-DNA. This chain is Structure-specific endonuclease subunit SLX1, found in Malassezia globosa (strain ATCC MYA-4612 / CBS 7966) (Dandruff-associated fungus).